Here is a 241-residue protein sequence, read N- to C-terminus: Probable septum site-determining protein MinC (241 aa).

The protein belongs to the MinC family. In terms of assembly, interacts with MinD and FtsZ.

Cell division inhibitor that blocks the formation of polar Z ring septums. Rapidly oscillates between the poles of the cell to destabilize FtsZ filaments that have formed before they mature into polar Z rings. Prevents FtsZ polymerization. The polypeptide is Probable septum site-determining protein MinC (Rhizobium rhizogenes (strain K84 / ATCC BAA-868) (Agrobacterium radiobacter)).